The sequence spans 298 residues: 4-hydroxy-tetrahydrodipicolinate synthase (298 aa).

A pyruvate-binding site is contributed by Thr51. The active-site Proton donor/acceptor is the Tyr139. The active-site Schiff-base intermediate with substrate is Lys167. Ile209 contacts pyruvate.

It belongs to the DapA family. As to quaternary structure, homotetramer; dimer of dimers.

It localises to the cytoplasm. It carries out the reaction L-aspartate 4-semialdehyde + pyruvate = (2S,4S)-4-hydroxy-2,3,4,5-tetrahydrodipicolinate + H2O + H(+). Its pathway is amino-acid biosynthesis; L-lysine biosynthesis via DAP pathway; (S)-tetrahydrodipicolinate from L-aspartate: step 3/4. In terms of biological role, catalyzes the condensation of (S)-aspartate-beta-semialdehyde [(S)-ASA] and pyruvate to 4-hydroxy-tetrahydrodipicolinate (HTPA). The chain is 4-hydroxy-tetrahydrodipicolinate synthase from Haemophilus influenzae (strain PittGG).